We begin with the raw amino-acid sequence, 349 residues long: Flap endonuclease 1 (349 aa).

Residues 1–102 are N-domain; the sequence is MGVTELGKLI…AEIEARRRVK (102 aa). Mg(2+) is bound by residues Asp-31, Asp-84, Glu-156, Glu-158, Asp-177, Asp-179, and Asp-239. Positions 120–261 are I-domain; the sequence is DVAKYMKRVI…KALKLVLEFG (142 aa).

The protein belongs to the XPG/RAD2 endonuclease family. FEN1 subfamily. In terms of assembly, interacts with PCNA. PCNA stimulates the nuclease activity without altering cleavage specificity. Mg(2+) is required as a cofactor.

Its function is as follows. Structure-specific nuclease with 5'-flap endonuclease and 5'-3' exonuclease activities involved in DNA replication and repair. During DNA replication, cleaves the 5'-overhanging flap structure that is generated by displacement synthesis when DNA polymerase encounters the 5'-end of a downstream Okazaki fragment. Binds the unpaired 3'-DNA end and kinks the DNA to facilitate 5' cleavage specificity. Cleaves one nucleotide into the double-stranded DNA from the junction in flap DNA, leaving a nick for ligation. Also involved in the base excision repair (BER) pathway. Acts as a genome stabilization factor that prevents flaps from equilibrating into structures that lead to duplications and deletions. Also possesses 5'-3' exonuclease activity on nicked or gapped double-stranded DNA. The polypeptide is Flap endonuclease 1 (Pyrobaculum neutrophilum (strain DSM 2338 / JCM 9278 / NBRC 100436 / V24Sta) (Thermoproteus neutrophilus)).